We begin with the raw amino-acid sequence, 163 residues long: Putative 4-hydroxy-4-methyl-2-oxoglutarate aldolase (163 aa).

Substrate is bound by residues 75–78 (GDQL) and R97. D98 serves as a coordination point for a divalent metal cation.

This sequence belongs to the class II aldolase/RraA-like family. As to quaternary structure, homotrimer. It depends on a divalent metal cation as a cofactor.

The enzyme catalyses 4-hydroxy-4-methyl-2-oxoglutarate = 2 pyruvate. It catalyses the reaction oxaloacetate + H(+) = pyruvate + CO2. In terms of biological role, catalyzes the aldol cleavage of 4-hydroxy-4-methyl-2-oxoglutarate (HMG) into 2 molecules of pyruvate. Also contains a secondary oxaloacetate (OAA) decarboxylase activity due to the common pyruvate enolate transition state formed following C-C bond cleavage in the retro-aldol and decarboxylation reactions. The protein is Putative 4-hydroxy-4-methyl-2-oxoglutarate aldolase of Photobacterium profundum (strain SS9).